Consider the following 429-residue polypeptide: Protein arginine N-methyltransferase 2 (429 aa).

Disordered regions lie at residues 41 to 76 (PEVARGQDPKTGESPLHAAIRSCGAPSEDDTPEDHE) and 137 to 180 (ALDS…EETP). A compositionally biased stretch (acidic residues) spans 137 to 163 (ALDSDDEDDEEMAEGEEAQAEDGEEAP). A compositionally biased stretch (low complexity) spans 164–174 (ELVAAEEATQT). Residues 190–429 (LEEQVTSDKY…YRLPVCTFLG (240 aa)) form the RMT2 domain. S-adenosyl-L-methionine contacts are provided by residues Tyr-199, Met-228, 250-255 (FGMGII), 271-273 (EAH), 308-309 (WQ), and Asp-328.

Belongs to the class I-like SAM-binding methyltransferase superfamily. RMT2 methyltransferase family. In terms of assembly, monomer.

The protein resides in the cytoplasm. The protein localises to the nucleus. Functionally, S-adenosyl-L-methionine-dependent protein-arginine N-methyltransferase that methylates the delta-nitrogen atom of arginine residues to form N5-methylarginine (type IV) in target proteins. Monomethylates ribosomal protein L12. The chain is Protein arginine N-methyltransferase 2 from Neurospora crassa (strain ATCC 24698 / 74-OR23-1A / CBS 708.71 / DSM 1257 / FGSC 987).